Consider the following 303-residue polypeptide: Rhomboid-related protein 2 (303 aa).

The segment at 20–39 is disordered; that stretch reads MKEELEEEEKMREDGGGKDR. Positions 28-39 are enriched in basic and acidic residues; sequence EKMREDGGGKDR. The next 7 helical transmembrane spans lie at 72 to 92, 128 to 148, 159 to 179, 183 to 203, 212 to 232, 245 to 265, and 278 to 298; these read PVFI…YAVW, LVHA…VLGI, VGLV…IFDP, LVGA…NVLV, FGIF…GFAL, VSFA…YTVF, and FWIA…FNIF. S187 serves as the catalytic Nucleophile. The active site involves H250.

The protein belongs to the peptidase S54 family. In terms of processing, proteolytic processing of the proenzyme produces a N-terminal fragment (NTF) and a C-terminal fragment (CTF). The processing is required for activation of the protease.

It localises to the cell membrane. The enzyme catalyses Cleaves type-1 transmembrane domains using a catalytic dyad composed of serine and histidine that are contributed by different transmembrane domains.. Its function is as follows. Involved in regulated intramembrane proteolysis and the subsequent release of functional polypeptides from their membrane anchors. Known substrate: EFNB3. The sequence is that of Rhomboid-related protein 2 (RHBDL2) from Homo sapiens (Human).